A 518-amino-acid chain; its full sequence is Glutamate--cysteine ligase (518 aa).

The protein belongs to the glutamate--cysteine ligase type 1 family. Type 1 subfamily.

The enzyme catalyses L-cysteine + L-glutamate + ATP = gamma-L-glutamyl-L-cysteine + ADP + phosphate + H(+). The protein operates within sulfur metabolism; glutathione biosynthesis; glutathione from L-cysteine and L-glutamate: step 1/2. This chain is Glutamate--cysteine ligase, found in Escherichia coli O7:K1 (strain IAI39 / ExPEC).